We begin with the raw amino-acid sequence, 253 residues long: Adenosylcobinamide-GDP ribazoletransferase (253 aa).

Transmembrane regions (helical) follow at residues 33–53 (ISPL…YVLL), 56–76 (ILEA…RGFN), 106–126 (IGSG…VALL), 132–152 (FYTI…GLYI), 178–198 (VLLF…FLVF), 209–229 (LGGS…PLFL), and 233–253 (EITN…LYLH).

The protein belongs to the CobS family. Mg(2+) is required as a cofactor.

Its subcellular location is the cell membrane. The catalysed reaction is alpha-ribazole + adenosylcob(III)inamide-GDP = adenosylcob(III)alamin + GMP + H(+). It catalyses the reaction alpha-ribazole 5'-phosphate + adenosylcob(III)inamide-GDP = adenosylcob(III)alamin 5'-phosphate + GMP + H(+). It participates in cofactor biosynthesis; adenosylcobalamin biosynthesis; adenosylcobalamin from cob(II)yrinate a,c-diamide: step 7/7. Its function is as follows. Joins adenosylcobinamide-GDP and alpha-ribazole to generate adenosylcobalamin (Ado-cobalamin). Also synthesizes adenosylcobalamin 5'-phosphate from adenosylcobinamide-GDP and alpha-ribazole 5'-phosphate. In Saccharolobus islandicus (strain M.16.27) (Sulfolobus islandicus), this protein is Adenosylcobinamide-GDP ribazoletransferase.